We begin with the raw amino-acid sequence, 855 residues long: Vomeronasal type-2 receptor 26 (855 aa).

The signal sequence occupies residues 1–22; the sequence is MKLLTAFSPLVVLILFQEQISC. The Extracellular segment spans residues 23–595; that stretch reads YYLTKYASSG…FLAHEDPLGT (573 aa). N-linked (GlcNAc...) asparagine glycosylation is found at N101 and N295. A helical transmembrane segment spans residues 596 to 616; that stretch reads VLVSLAISLSAFSAMILGLFI. Over 617–630 the chain is Cytoplasmic; that stretch reads CYRETPIVRANNRN. The chain crosses the membrane as a helical span at residues 631-651; that stretch reads LSYLLLISLKLCFSCSLMFIG. Over 652–662 the chain is Extracellular; that stretch reads QPRTVTCVLRQ. Residues 663–683 traverse the membrane as a helical segment; that stretch reads IIFGIVFSIVISAILAKTFIV. Residues 684–706 lie on the Cytoplasmic side of the membrane; that stretch reads VMAFKAIKPGSILKMGMVTRLSN. Residues 707 to 727 form a helical membrane-spanning segment; the sequence is AIVCCGSIIQVCICAVWLGTY. Residues 728–753 lie on the Extracellular side of the membrane; that stretch reads PPFPDVDMHSEFGQIILWCNEGSTLA. Residues 754–774 traverse the membrane as a helical segment; the sequence is FYCVLGYLGFLASLSLLIAFL. At 775 to 786 the chain is on the cytoplasmic side; it reads ARRLPDSFNEAK. The chain crosses the membrane as a helical span at residues 787–807; sequence TITFSMLVFCSVWISFVPAYL. The Extracellular portion of the chain corresponds to 808 to 814; sequence SSKGKTM. A helical membrane pass occupies residues 815–835; it reads VAVEILSILASSAGLLGCIFL. Residues 836 to 855 lie on the Cytoplasmic side of the membrane; it reads PKCYVILLKSGGHSRKKFFK.

The protein belongs to the G-protein coupled receptor 3 family. As to expression, expressed in the basal epithelium of the vomeronasal organ. Located to vomeronasal sensory neurons that project their axons to six to ten glomeruli that reside in globally conserved areas within the caudal accessory olfactory bulb (AOB).

It localises to the cell membrane. Putative pheromone receptor. The chain is Vomeronasal type-2 receptor 26 (Vmn2r26) from Mus musculus (Mouse).